The primary structure comprises 174 residues: NADH-ubiquinone oxidoreductase chain 6 (174 aa).

4 consecutive transmembrane segments (helical) span residues 25–45, 48–68, 82–102, and 143–163; these read SMGL…SIYV, FWFS…LFIY, FSLT…FFMI, and LITL…VKIT.

This sequence belongs to the complex I subunit 6 family.

Its subcellular location is the mitochondrion membrane. It carries out the reaction a ubiquinone + NADH + 5 H(+)(in) = a ubiquinol + NAD(+) + 4 H(+)(out). Functionally, core subunit of the mitochondrial membrane respiratory chain NADH dehydrogenase (Complex I) that is believed to belong to the minimal assembly required for catalysis. Complex I functions in the transfer of electrons from NADH to the respiratory chain. The immediate electron acceptor for the enzyme is believed to be ubiquinone. In Anopheles albimanus (New world malaria mosquito), this protein is NADH-ubiquinone oxidoreductase chain 6 (ND6).